A 237-amino-acid chain; its full sequence is Probable transcriptional regulatory protein WS1016 (237 aa).

It belongs to the TACO1 family.

It is found in the cytoplasm. The protein is Probable transcriptional regulatory protein WS1016 of Wolinella succinogenes (strain ATCC 29543 / DSM 1740 / CCUG 13145 / JCM 31913 / LMG 7466 / NCTC 11488 / FDC 602W) (Vibrio succinogenes).